A 155-amino-acid polypeptide reads, in one-letter code: Small ribosomal subunit protein uS7cz/uS7cy (155 aa).

Belongs to the universal ribosomal protein uS7 family. In terms of assembly, part of the 30S ribosomal subunit.

The protein resides in the plastid. One of the primary rRNA binding proteins, it binds directly to 16S rRNA where it nucleates assembly of the head domain of the 30S subunit. This chain is Small ribosomal subunit protein uS7cz/uS7cy (rps7-A), found in Epifagus virginiana (Beechdrops).